The chain runs to 279 residues: Urease accessory protein UreD (279 aa).

The protein belongs to the UreD family. As to quaternary structure, ureD, UreF and UreG form a complex that acts as a GTP-hydrolysis-dependent molecular chaperone, activating the urease apoprotein by helping to assemble the nickel containing metallocenter of UreC. The UreE protein probably delivers the nickel.

The protein resides in the cytoplasm. In terms of biological role, required for maturation of urease via the functional incorporation of the urease nickel metallocenter. This chain is Urease accessory protein UreD, found in Rhodopseudomonas palustris (strain ATCC BAA-98 / CGA009).